Consider the following 385-residue polypeptide: 8-amino-7-oxononanoate synthase (385 aa).

Residue Arg-23 coordinates substrate. Position 110–111 (Gly-110–Phe-111) interacts with pyridoxal 5'-phosphate. Position 135 (His-135) interacts with substrate. Positions 180, 208, and 234 each coordinate pyridoxal 5'-phosphate. Lys-237 carries the N6-(pyridoxal phosphate)lysine modification. Thr-350 serves as a coordination point for substrate.

Belongs to the class-II pyridoxal-phosphate-dependent aminotransferase family. BioF subfamily. Homodimer. The cofactor is pyridoxal 5'-phosphate.

It catalyses the reaction 6-carboxyhexanoyl-[ACP] + L-alanine + H(+) = (8S)-8-amino-7-oxononanoate + holo-[ACP] + CO2. The protein operates within cofactor biosynthesis; biotin biosynthesis. In terms of biological role, catalyzes the decarboxylative condensation of pimeloyl-[acyl-carrier protein] and L-alanine to produce 8-amino-7-oxononanoate (AON), [acyl-carrier protein], and carbon dioxide. This is 8-amino-7-oxononanoate synthase from Vibrio vulnificus (strain CMCP6).